We begin with the raw amino-acid sequence, 603 residues long: ATP-dependent zinc metalloprotease FtsH (603 aa).

The Stromal segment spans residues 1 to 2 (MK). A helical membrane pass occupies residues 3 to 23 (NLWIWSLPLIVLAFIGWQELA). Residues 24–101 (NQMPVATSRM…DVDVHAVSNW (78 aa)) are Lumenal-facing. The helical transmembrane segment at 102-122 (INVASNWIIPLIIIGVVIWLL) threads the bilayer. Topologically, residues 123–603 (SRSASSNTTG…SQAARLTAVN (481 aa)) are stromal. 194–201 (GPPGTGKT) provides a ligand contact to ATP. Zn(2+) is bound at residue histidine 415. Residue glutamate 416 is part of the active site. 2 residues coordinate Zn(2+): histidine 419 and aspartate 493.

In the central section; belongs to the AAA ATPase family. This sequence in the C-terminal section; belongs to the peptidase M41 family. Homohexamer. Zn(2+) is required as a cofactor.

The protein resides in the plastid. It is found in the chloroplast thylakoid membrane. Functionally, acts as a processive, ATP-dependent zinc metallopeptidase. This chain is ATP-dependent zinc metalloprotease FtsH, found in Cyanidioschyzon merolae (strain NIES-3377 / 10D) (Unicellular red alga).